The chain runs to 55 residues: ATP synthase F(0) complex subunit 8 (55 aa).

A helical transmembrane segment spans residues 8-24 (PWFMIMLMTWFTYSLLI).

The protein belongs to the ATPase protein 8 family. As to quaternary structure, component of the ATP synthase complex composed at least of ATP5F1A/subunit alpha, ATP5F1B/subunit beta, ATP5MC1/subunit c (homooctomer), MT-ATP6/subunit a, MT-ATP8/subunit 8, ATP5ME/subunit e, ATP5MF/subunit f, ATP5MG/subunit g, ATP5MK/subunit k, ATP5MJ/subunit j, ATP5F1C/subunit gamma, ATP5F1D/subunit delta, ATP5F1E/subunit epsilon, ATP5PF/subunit F6, ATP5PB/subunit b, ATP5PD/subunit d, ATP5PO/subunit OSCP. ATP synthase complex consists of a soluble F(1) head domain (subunits alpha(3) and beta(3)) - the catalytic core - and a membrane F(0) domain - the membrane proton channel (subunits c, a, 8, e, f, g, k and j). These two domains are linked by a central stalk (subunits gamma, delta, and epsilon) rotating inside the F1 region and a stationary peripheral stalk (subunits F6, b, d, and OSCP).

Its subcellular location is the mitochondrion membrane. Subunit 8, of the mitochondrial membrane ATP synthase complex (F(1)F(0) ATP synthase or Complex V) that produces ATP from ADP in the presence of a proton gradient across the membrane which is generated by electron transport complexes of the respiratory chain. ATP synthase complex consist of a soluble F(1) head domain - the catalytic core - and a membrane F(1) domain - the membrane proton channel. These two domains are linked by a central stalk rotating inside the F(1) region and a stationary peripheral stalk. During catalysis, ATP synthesis in the catalytic domain of F(1) is coupled via a rotary mechanism of the central stalk subunits to proton translocation. In vivo, can only synthesize ATP although its ATP hydrolase activity can be activated artificially in vitro. Part of the complex F(0) domain. This is ATP synthase F(0) complex subunit 8 from Coturnix japonica (Japanese quail).